Here is a 78-residue protein sequence, read N- to C-terminus: Acyl carrier protein (78 aa).

In terms of domain architecture, Carrier spans 2 to 77 (SDTVERVKKI…DAVKFIDKAS (76 aa)). O-(pantetheine 4'-phosphoryl)serine is present on serine 37.

Belongs to the acyl carrier protein (ACP) family. In terms of processing, 4'-phosphopantetheine is transferred from CoA to a specific serine of apo-ACP by AcpS. This modification is essential for activity because fatty acids are bound in thioester linkage to the sulfhydryl of the prosthetic group.

It localises to the cytoplasm. The protein operates within lipid metabolism; fatty acid biosynthesis. Functionally, carrier of the growing fatty acid chain in fatty acid biosynthesis. The sequence is that of Acyl carrier protein from Bartonella henselae (strain ATCC 49882 / DSM 28221 / CCUG 30454 / Houston 1) (Rochalimaea henselae).